A 276-amino-acid polypeptide reads, in one-letter code: Large ribosomal subunit protein uL2 (276 aa).

The interval 218–276 (PYVRGSAMNPVDHPHGGGEGRAPIGRPAPSTPWGKPALGLKTRKKNKKSNKYIVRRRKK) is disordered. Positions 258–276 (KTRKKNKKSNKYIVRRRKK) are enriched in basic residues.

It belongs to the universal ribosomal protein uL2 family. Part of the 50S ribosomal subunit. Forms a bridge to the 30S subunit in the 70S ribosome.

One of the primary rRNA binding proteins. Required for association of the 30S and 50S subunits to form the 70S ribosome, for tRNA binding and peptide bond formation. It has been suggested to have peptidyltransferase activity; this is somewhat controversial. Makes several contacts with the 16S rRNA in the 70S ribosome. The sequence is that of Large ribosomal subunit protein uL2 from Finegoldia magna (strain ATCC 29328 / DSM 20472 / WAL 2508) (Peptostreptococcus magnus).